A 385-amino-acid polypeptide reads, in one-letter code: MALSLESTSFPMLAVSRSTASELPGGFNVSHNSSWTGPTDPSSLQDLVATGVIGAVLSTMGVVGVVGNVYTLVVMCRFLRASASMYVYVVNLALADLLYLLSIPFIVATYVTKDWHFGDVGCRVLFSLDFLTMHASIFTLTIMSSERYAAVLRPLDTVQRSKGYRKLLALGTWLLALLLTLPMMLAIRLVRRGSKSLCLPAWGPRAHRTYLTLLFGTSIVGPGLVIGLLYIRLARAYWLSQQASFKQTRRLPNPRVLYLILGIVLLFWACFLPFWLWQLLAQYHQAMPLTPETARIINYLTACLTYGNSCINPFLYTLLTKNYREYLRGRQRSLGSSCRGPGSAGSFLSSRVHLQQDSGRSLSSNSQQATETLVLSPVPPNGAFV.

The Extracellular segment spans residues 1-53 (MALSLESTSFPMLAVSRSTASELPGGFNVSHNSSWTGPTDPSSLQDLVATGVI). N-linked (GlcNAc...) asparagine glycans are attached at residues N28 and N32. Residues 54-76 (GAVLSTMGVVGVVGNVYTLVVMC) traverse the membrane as a helical segment. The Cytoplasmic segment spans residues 77–86 (RFLRASASMY). Residues 87–112 (VYVVNLALADLLYLLSIPFIVATYVT) form a helical membrane-spanning segment. At 113 to 123 (KDWHFGDVGCR) the chain is on the extracellular side. Cysteines 122 and 198 form a disulfide. Residues 124–145 (VLFSLDFLTMHASIFTLTIMSS) form a helical membrane-spanning segment. The Cytoplasmic portion of the chain corresponds to 146–166 (ERYAAVLRPLDTVQRSKGYRK). A helical transmembrane segment spans residues 167–185 (LLALGTWLLALLLTLPMML). Topologically, residues 186 to 208 (AIRLVRRGSKSLCLPAWGPRAHR) are extracellular. The chain crosses the membrane as a helical span at residues 209–231 (TYLTLLFGTSIVGPGLVIGLLYI). Over 232-257 (RLARAYWLSQQASFKQTRRLPNPRVL) the chain is Cytoplasmic. A helical membrane pass occupies residues 258-283 (YLILGIVLLFWACFLPFWLWQLLAQY). At 284 to 298 (HQAMPLTPETARIIN) the chain is on the extracellular side. A helical membrane pass occupies residues 299–320 (YLTACLTYGNSCINPFLYTLLT). Over 321–385 (KNYREYLRGR…SPVPPNGAFV (65 aa)) the chain is Cytoplasmic.

This sequence belongs to the G-protein coupled receptor 1 family.

Its subcellular location is the cell membrane. High affinity receptor for urotensin-2 and urotensin-2B. The activity of this receptor is mediated by a G-protein that activate a phosphatidylinositol-calcium second messenger system. This chain is Urotensin-2 receptor (Uts2r), found in Mus musculus (Mouse).